Reading from the N-terminus, the 390-residue chain is Imidazolonepropionase (390 aa).

Positions 71 and 73 each coordinate Fe(3+). Zn(2+) contacts are provided by His-71 and His-73. Residues Arg-80, Tyr-138, and His-165 each contribute to the 4-imidazolone-5-propanoate site. An N-formimidoyl-L-glutamate-binding site is contributed by Tyr-138. A Fe(3+)-binding site is contributed by His-228. Residue His-228 coordinates Zn(2+). Gln-231 contributes to the 4-imidazolone-5-propanoate binding site. Asp-302 is a binding site for Fe(3+). A Zn(2+)-binding site is contributed by Asp-302. 2 residues coordinate N-formimidoyl-L-glutamate: Asn-304 and Gly-306. Ser-307 is a 4-imidazolone-5-propanoate binding site.

The protein belongs to the metallo-dependent hydrolases superfamily. HutI family. It depends on Zn(2+) as a cofactor. The cofactor is Fe(3+).

The protein resides in the cytoplasm. It catalyses the reaction 4-imidazolone-5-propanoate + H2O = N-formimidoyl-L-glutamate. The protein operates within amino-acid degradation; L-histidine degradation into L-glutamate; N-formimidoyl-L-glutamate from L-histidine: step 3/3. In terms of biological role, catalyzes the hydrolytic cleavage of the carbon-nitrogen bond in imidazolone-5-propanoate to yield N-formimidoyl-L-glutamate. It is the third step in the universal histidine degradation pathway. The protein is Imidazolonepropionase of Streptomyces griseus subsp. griseus (strain JCM 4626 / CBS 651.72 / NBRC 13350 / KCC S-0626 / ISP 5235).